Consider the following 640-residue polypeptide: MAETLITKPPLSLSFTSLSSMLPSLSLSTANRHLSVTDTIPLPNSNSNATPPLRIAIIGFGNYGQFLAETLISQGHILFAHSRSDHSSAARRLGVSYFTDLHDLCERHPDVVLLCTSILSIENILKTLPFQRLRRNTLFVDVLSVKEFAKTLLLQYLPEDFDILCTHPMFGPQSVSSNHGWRGLRFVYDKVRIGEERLRVSRCESFLEIFVREGCEMVEMSVTDHDKFAAESQFITHTLGRLLGMLKLISTPINTKGYEALLDLAENICGDSFDLYYGLFVYNNNSLEVLERIDLAFEALRKELFSRLHGVVRKQSFEGEAKKVHVFPNCGENDASLDMMRSEDVVVKYEYNSQVSGSVNDGSRLKIGIVGFGNFGQFLGKTMVKQGHTVLAYSRSDYTDEAAKLGVSYFSDLDDLFEEHPEVIILCTSILSTEKVLESLPFQRLKRSTLFVDVLSVKEFPRNLFLQTLPQDFDILCTHPMFGPESGKNGWNNLAFVFDKVRIGMDDRRKSRCNSFLDIFAREGCRMVEMSCAEHDWHAAGSQFITHTVGRLLEKLSLESTPIDTKGYETLLKLVENTAGDSFDLYYGLFLYNPNAMEQLERFHVAFESLKTQLFGRLHSQHSHELAKSSSPKTTKLLTS.

Residues 1–18 constitute a chloroplast transit peptide; sequence MAETLITKPPLSLSFTSL. Prephenate/arogenate dehydrogenase domains lie at 53–334 and 365–640; these read LRIA…GEND and LKIG…LLTS.

Belongs to the prephenate/arogenate dehydrogenase family. Expressed in roots, stems, leaves, flowers, siliques and seeds. More abundant in seeds.

It is found in the plastid. Its subcellular location is the chloroplast. It carries out the reaction L-arogenate + NADP(+) = L-tyrosine + CO2 + NADPH. It functions in the pathway amino-acid biosynthesis; L-tyrosine biosynthesis; L-tyrosine from L-arogenate (NADP(+) route): step 1/1. Involved in the biosynthesis of tyrosine. Has no prephenate dehydrogenase activity. The chain is Arogenate dehydrogenase 1, chloroplastic (TYRAAT1) from Arabidopsis thaliana (Mouse-ear cress).